A 163-amino-acid chain; its full sequence is Globin CTT-Z (163 aa).

The signal sequence occupies residues 1-16 (MKFFAVLALCIVGAIA). The Globin domain occupies 18-162 (PLTSDEAALV…VYTAVFQIVT (145 aa)). Heme b-binding residues include H76 and H111.

It belongs to the globin family.

This is Globin CTT-Z (CTT-Z) from Chironomus thummi piger (Midge).